The chain runs to 299 residues: uncharacterized protein (299 aa).

The helical transmembrane segment at 4–20 (LFFIFVMLIVLLCGCTS) threads the bilayer.

It localises to the membrane. This is an uncharacterized protein from Methanocaldococcus jannaschii (strain ATCC 43067 / DSM 2661 / JAL-1 / JCM 10045 / NBRC 100440) (Methanococcus jannaschii).